Here is a 214-residue protein sequence, read N- to C-terminus: Thymidylate kinase (214 aa).

Residue 10–17 (GGEGAGKS) participates in ATP binding.

This sequence belongs to the thymidylate kinase family.

The catalysed reaction is dTMP + ATP = dTDP + ADP. Phosphorylation of dTMP to form dTDP in both de novo and salvage pathways of dTTP synthesis. The chain is Thymidylate kinase from Brucella canis (strain ATCC 23365 / NCTC 10854 / RM-666).